Reading from the N-terminus, the 250-residue chain is 1-(5-phosphoribosyl)-5-[(5-phosphoribosylamino)methylideneamino] imidazole-4-carboxamide isomerase (250 aa).

Asp12 acts as the Proton acceptor in catalysis. Asp134 serves as the catalytic Proton donor.

It belongs to the HisA/HisF family.

The protein resides in the cytoplasm. The catalysed reaction is 1-(5-phospho-beta-D-ribosyl)-5-[(5-phospho-beta-D-ribosylamino)methylideneamino]imidazole-4-carboxamide = 5-[(5-phospho-1-deoxy-D-ribulos-1-ylimino)methylamino]-1-(5-phospho-beta-D-ribosyl)imidazole-4-carboxamide. The protein operates within amino-acid biosynthesis; L-histidine biosynthesis; L-histidine from 5-phospho-alpha-D-ribose 1-diphosphate: step 4/9. The protein is 1-(5-phosphoribosyl)-5-[(5-phosphoribosylamino)methylideneamino] imidazole-4-carboxamide isomerase of Actinobacillus pleuropneumoniae serotype 3 (strain JL03).